Consider the following 109-residue polypeptide: Aquaporin-2 (109 aa).

Residues 1–6 (SVAFSR) lie on the Cytoplasmic side of the membrane. Residues 7 to 27 (AVLAEFLATLIFVFFGLGSAL) form a helical membrane-spanning segment. Over 28 to 35 (SWPQALPS) the chain is Extracellular. Residues 36–54 (VLQIALAFGLAIGTLVQAL) traverse the membrane as a helical segment. Residues 55–59 (GHVSG) lie on the Cytoplasmic side of the membrane. An intramembrane region (discontinuously helical) is located at residues 60-69 (AHINPAVTVA). Positions 63-65 (NPA) match the NPA 1 motif. Residues 70–80 (CLVGCHVSFLR) are Cytoplasmic-facing. The helical transmembrane segment at 81–102 (AAFYVAAQLLGAVAGAAILHEI) threads the bilayer. Over 103 to 109 (TPPDVRG) the chain is Extracellular.

Belongs to the MIP/aquaporin (TC 1.A.8) family. Homotetramer. Serine phosphorylation is necessary and sufficient for expression at the apical membrane. Endocytosis is not phosphorylation-dependent. In terms of processing, N-glycosylated.

The protein resides in the apical cell membrane. It localises to the basolateral cell membrane. The protein localises to the cell membrane. Its subcellular location is the cytoplasmic vesicle membrane. It is found in the golgi apparatus. The protein resides in the trans-Golgi network membrane. The catalysed reaction is H2O(in) = H2O(out). It carries out the reaction glycerol(in) = glycerol(out). Functionally, forms a water-specific channel that provides the plasma membranes of renal collecting duct with high permeability to water, thereby permitting water to move in the direction of an osmotic gradient. Plays an essential role in renal water homeostasis. Could also be permeable to glycerol. The sequence is that of Aquaporin-2 from Dasypus novemcinctus (Nine-banded armadillo).